Reading from the N-terminus, the 256-residue chain is Pimeloyl-[acyl-carrier protein] methyl ester esterase (256 aa).

The AB hydrolase-1 domain maps to H15 to P242. Substrate contacts are provided by residues W22, S82–L83, and F143–Q147. The active-site Nucleophile is S82. Residues D207 and H235 contribute to the active site. H235 provides a ligand contact to substrate.

This sequence belongs to the AB hydrolase superfamily. Carboxylesterase BioH family. As to quaternary structure, monomer.

It localises to the cytoplasm. The enzyme catalyses 6-carboxyhexanoyl-[ACP] methyl ester + H2O = 6-carboxyhexanoyl-[ACP] + methanol + H(+). It functions in the pathway cofactor biosynthesis; biotin biosynthesis. Its function is as follows. The physiological role of BioH is to remove the methyl group introduced by BioC when the pimeloyl moiety is complete. It allows to synthesize pimeloyl-ACP via the fatty acid synthetic pathway through the hydrolysis of the ester bonds of pimeloyl-ACP esters. This Escherichia coli O45:K1 (strain S88 / ExPEC) protein is Pimeloyl-[acyl-carrier protein] methyl ester esterase.